The sequence spans 237 residues: Proteasome subunit alpha type-5-A (237 aa).

The residue at position 1 (methionine 1) is an N-acetylmethionine. Residues lysine 43 and lysine 66 each participate in a glycyl lysine isopeptide (Lys-Gly) (interchain with G-Cter in ubiquitin) cross-link.

It belongs to the peptidase T1A family. As to quaternary structure, component of the 20S core complex of the 26S proteasome. The 26S proteasome is composed of a core protease (CP), known as the 20S proteasome, capped at one or both ends by the 19S regulatory particle (RP/PA700). The 20S proteasome core is composed of 28 subunits that are arranged in four stacked rings, resulting in a barrel-shaped structure. The two end rings are each formed by seven alpha subunits, and the two central rings are each formed by seven beta subunits. The catalytic chamber with the active sites is on the inside of the barrel.

The protein localises to the cytoplasm. Its subcellular location is the nucleus. Its function is as follows. The proteasome is a multicatalytic proteinase complex which is characterized by its ability to cleave peptides with Arg, Phe, Tyr, Leu, and Glu adjacent to the leaving group at neutral or slightly basic pH. The proteasome has an ATP-dependent proteolytic activity. The protein is Proteasome subunit alpha type-5-A (PAE1) of Arabidopsis thaliana (Mouse-ear cress).